A 349-amino-acid polypeptide reads, in one-letter code: Protein O-mannose kinase (349 aa).

At 1–19 the chain is on the cytoplasmic side; sequence MGQQHGTRNGLTHRELPRG. A helical; Signal-anchor for type II membrane protein transmembrane segment spans residues 20–42; that stretch reads VGLLLAMALMNVALYLCLDQLFI. The Lumenal segment spans residues 43-349; that stretch reads SPGRSTADSR…TVMSQTKEML (307 aa). Asn-66, Asn-164, and Asn-219 each carry an N-linked (GlcNAc...) asparagine glycan. A Protein kinase domain is found at 80 to 349; the sequence is VRQLKRVGEG…TVMSQTKEML (270 aa).

The protein belongs to the protein kinase superfamily. Ser/Thr protein kinase family. STKL subfamily.

It localises to the endoplasmic reticulum membrane. The catalysed reaction is 3-O-[beta-D-GalNAc-(1-&gt;3)-beta-D-GlcNAc-(1-&gt;4)-alpha-D-Man]-L-Thr-[protein] + ATP = 3-O-[beta-D-GalNAc-(1-&gt;3)-beta-D-GlcNAc-(1-&gt;4)-(O-6-P-alpha-D-Man)]-Thr-[protein] + ADP + H(+). Protein O-mannose kinase that specifically mediates phosphorylation at the 6-position of an O-mannose of the trisaccharide (N-acetylgalactosamine (GalNAc)-beta-1,3-N-acetylglucosamine (GlcNAc)-beta-1,4-mannose) to generate phosphorylated O-mannosyl trisaccharide (N-acetylgalactosamine-beta-1,3-N-acetylglucosamine-beta-1,4-(phosphate-6-)mannose). Phosphorylated O-mannosyl trisaccharide is a carbohydrate structure present in alpha-dystroglycan (DAG1), which is required for binding laminin G-like domain-containing extracellular proteins with high affinity. Only shows kinase activity when the GalNAc-beta-3-GlcNAc-beta-terminus is linked to the 4-position of O-mannose, suggesting that this disaccharide serves as the substrate recognition motif. In Mus musculus (Mouse), this protein is Protein O-mannose kinase (Pomk).